Here is a 196-residue protein sequence, read N- to C-terminus: Regulator of G-protein signaling 1 (196 aa).

A disordered region spans residues 1-27 (MPGMFFSANPKDLKGTDQSLLDDKTQK). Over residues 11-25 (KDLKGTDQSLLDDKT) the composition is skewed to basic and acidic residues. The RGS domain occupies 72–187 (SLEKLLANQT…LKSNIYLNLL (116 aa)).

In terms of assembly, interacts with GNAI1 and GNAQ.

It is found in the cell membrane. It localises to the cytoplasm. Its subcellular location is the cytosol. Its function is as follows. Regulates G protein-coupled receptor signaling cascades, including signaling downstream of the N-formylpeptide chemoattractant receptors and leukotriene receptors. Inhibits B cell chemotaxis toward CXCL12. Inhibits signal transduction by increasing the GTPase activity of G protein alpha subunits, thereby driving them into their inactive GDP-bound form. This chain is Regulator of G-protein signaling 1 (RGS1), found in Equus caballus (Horse).